Reading from the N-terminus, the 77-residue chain is MKHLIVAVVLLSALAICTSAEEEQVNVPFRPEERIGECAGWNDNCDKRSCCDQCHQCRCKFGSNCRCTGTKPSCGKR.

The signal sequence occupies residues Met-1 to Ala-20. Residues Glu-21–Arg-34 constitute a propeptide that is removed on maturation. Intrachain disulfides connect Cys-38-Cys-51, Cys-45-Cys-57, Cys-50-Cys-67, Cys-54-Cys-74, and Cys-59-Cys-65. Ser-73 carries O-palmitoyl serine lipidation. Cys-74 carries the cysteine amide modification.

It belongs to the neurotoxin 02 (plectoxin) family. 01 (Tx3) subfamily. As to expression, expressed by the venom gland.

The protein localises to the secreted. In terms of biological role, excitatory toxin that acts on both calcium and sodium (Nav) channels. It preferentially blocks a subset of calcium channels that is apparently not required for neurotransmitter release, it decreases threshold for sodium channel activation and it slows sodium channel inactivation. As it enhances synaptic transmission by prolonging presynaptic release of neurotransmitter, its effects on sodium and calcium channels may act synergistically to sustain the terminal excitability. This is Delta/omega-plectoxin-Pt1a from Plectreurys tristis (Spider).